The primary structure comprises 322 residues: Transaldolase (322 aa).

The active-site Schiff-base intermediate with substrate is Lys136.

The protein belongs to the transaldolase family. Type 1 subfamily. As to quaternary structure, homodimer.

It is found in the cytoplasm. The enzyme catalyses D-sedoheptulose 7-phosphate + D-glyceraldehyde 3-phosphate = D-erythrose 4-phosphate + beta-D-fructose 6-phosphate. It participates in carbohydrate degradation; pentose phosphate pathway; D-glyceraldehyde 3-phosphate and beta-D-fructose 6-phosphate from D-ribose 5-phosphate and D-xylulose 5-phosphate (non-oxidative stage): step 2/3. In terms of biological role, transaldolase is important for the balance of metabolites in the pentose-phosphate pathway. The chain is Transaldolase from Xanthomonas campestris pv. campestris (strain B100).